The chain runs to 353 residues: UPF0283 membrane protein YcjF (353 aa).

3 helical membrane-spanning segments follow: residues 70–90 (MVMGGLALFGASVVGQGIQWT), 100–120 (VALGGCAAGALIIGAGVGSVV), and 213–233 (ESTLMIAVSPLALVDMAFIAW).

This sequence belongs to the UPF0283 family.

The protein resides in the cell inner membrane. The chain is UPF0283 membrane protein YcjF from Shigella flexneri serotype 5b (strain 8401).